The primary structure comprises 441 residues: Membrane protein PB1A10.07c (441 aa).

Transmembrane regions (helical) follow at residues 1-21, 41-61, 97-117, 128-148, 158-178, 206-226, 235-255, 263-283, 307-327, 364-384, and 415-435; these read MGAV…VVGI, VGAV…SWCM, LSFT…LCNT, GLWP…FFIP, IISV…LVDF, TVGM…FFCA, INTI…HPTI, GLAQ…SALA, VIGA…AASS, YNFI…ASLL, and IITS…PVFF.

The protein belongs to the TDE1 family.

The protein localises to the membrane. The chain is Membrane protein PB1A10.07c from Schizosaccharomyces pombe (strain 972 / ATCC 24843) (Fission yeast).